Consider the following 145-residue polypeptide: Acidic phospholipase A2 (145 aa).

The first 19 residues, 1 to 19 (MNPAHLLILSAVCVSLLGA), serve as a signal peptide directing secretion. Residues 20–27 (ANVPPQHL) constitute a propeptide that is removed on maturation. Cystine bridges form between C38–C97, C52–C144, C54–C70, C69–C125, C76–C118, C86–C111, and C104–C116. Ca(2+)-binding residues include Y53, G55, and G57. Residue H73 is part of the active site. D74 lines the Ca(2+) pocket. Residue D119 is part of the active site.

The protein belongs to the phospholipase A2 family. Group I subfamily. D49 sub-subfamily. Requires Ca(2+) as cofactor. As to expression, expressed by the venom gland.

It is found in the secreted. It catalyses the reaction a 1,2-diacyl-sn-glycero-3-phosphocholine + H2O = a 1-acyl-sn-glycero-3-phosphocholine + a fatty acid + H(+). In terms of biological role, PLA2 catalyzes the calcium-dependent hydrolysis of the 2-acyl groups in 3-sn-phosphoglycerides. The protein is Acidic phospholipase A2 of Bungarus multicinctus (Many-banded krait).